Here is a 213-residue protein sequence, read N- to C-terminus: MGGVGLFYVGAVLIIDGLMLLGRISPRGATPLNFFVGGLQVVTPTVLILQSGGDAAVIFAASGLYLFGFTYLWVAINNVTDWDGEGLGWFSLFVAIAALGYSWHAFTAEADPAFGVIWLLWAVLWFMLFLLLGLGHDALGPAVGFVAVAEGVITAAVPAFLIVSGNWETGPLPAAVIAVIGFAAVVLAYPIGRRLAAPSVTNPPPAALAATTR.

6 consecutive transmembrane segments (helical) span residues 4–20, 32–48, 56–72, 116–132, 146–162, and 172–188; these read VGLF…GLML, LNFF…TVLI, AVIF…FTYL, VIWL…FLLL, VAVA…AFLI, and LPAA…VVLA.

This sequence belongs to the AmiS/UreI family.

It localises to the cell membrane. Its function is as follows. Possible transporter that might be responsible for the adsorption of amidase substrates or release of their hydrolysis products. The sequence is that of Putative amidate substrates transporter protein from Mycolicibacterium smegmatis (Mycobacterium smegmatis).